The primary structure comprises 505 residues: uncharacterized protein (505 aa).

An N-terminal signal peptide occupies residues 1-19; it reads MILFTAIILVASVVHVVVS. Over 20-483 the chain is Extracellular; it reads SPQQCYYCVE…EQPNSAPRGE (464 aa). A helical transmembrane segment spans residues 484 to 504; that stretch reads IHQLFRCTFVAVFIVFACFIV. Position 505 (cysteine 505) is a topological domain, cytoplasmic.

As to expression, component of the acid-insoluble and acid-soluble organic matrix of the aragonitic skeleton (at protein level).

Its subcellular location is the membrane. This is an uncharacterized protein from Acropora millepora (Staghorn coral).